The sequence spans 245 residues: uncharacterized protein (245 aa).

A signal peptide spans 1 to 18 (MKSAAILALLAQALAVTA). Positions 21-66 (VEGDRTPGTRTLDLPNFPGGSVPTRGVEKRADLPPDNGGGNAPDPD) are disordered. 2 N-linked (GlcNAc...) asparagine glycosylation sites follow: asparagine 189 and asparagine 225.

Its subcellular location is the secreted. This is an uncharacterized protein from Arthroderma benhamiae (strain ATCC MYA-4681 / CBS 112371) (Trichophyton mentagrophytes).